The chain runs to 545 residues: Chaperonin GroEL (545 aa).

Residues 30–33 (TLGP), K51, 87–91 (DGTTT), G415, and D495 each bind ATP.

It belongs to the chaperonin (HSP60) family. Forms a cylinder of 14 subunits composed of two heptameric rings stacked back-to-back. Interacts with the co-chaperonin GroES.

It is found in the cytoplasm. It catalyses the reaction ATP + H2O + a folded polypeptide = ADP + phosphate + an unfolded polypeptide.. Functionally, together with its co-chaperonin GroES, plays an essential role in assisting protein folding. The GroEL-GroES system forms a nano-cage that allows encapsulation of the non-native substrate proteins and provides a physical environment optimized to promote and accelerate protein folding. The chain is Chaperonin GroEL from Shewanella oneidensis (strain ATCC 700550 / JCM 31522 / CIP 106686 / LMG 19005 / NCIMB 14063 / MR-1).